The following is a 328-amino-acid chain: Helicase VP6-A (328 aa).

2 disordered regions span residues 31–128 (DWTE…TGAN) and 180–237 (VAEQ…SVGI). 3 stretches are compositionally biased toward basic and acidic residues: residues 36–61 (ETNK…EGRN), 71–83 (AKET…DRRI), and 96–109 (PGER…RGDG). K110 lines the ATP pocket. Residues 110-128 (KVGGGGGDADAGVGTTGAN) are compositionally biased toward gly residues. Composition is skewed to basic and acidic residues over residues 180-205 (VAEQ…AAER) and 214-230 (PHGD…KTSE).

The protein belongs to the orbivirus VP6 family. As to quaternary structure, homohexamer.

It is found in the virion. The enzyme catalyses ATP + H2O = ADP + phosphate + H(+). Functionally, ATP dependent RNA helicase essential for RNA packaging and viral transcription. Possesses ss- and dsRNA-binding capacity. In Bluetongue virus 1 (isolate South Africa) (BTV 1), this protein is Helicase VP6-A (Segment-9).